We begin with the raw amino-acid sequence, 116 residues long: uncharacterized protein (116 aa).

2 helical membrane passes run 24-44 (VPFA…VLTA) and 70-90 (VILT…IILS).

It localises to the membrane. This is an uncharacterized protein from Saccharomyces cerevisiae (strain ATCC 204508 / S288c) (Baker's yeast).